A 93-amino-acid polypeptide reads, in one-letter code: MPRSLKKGPFIDDHLLKKVETQNDKGTKNVIKTWSRRSTIIPEMLGHTIAVHDGRKHVPVFVTEAMVGHKLGEFALTRTFKGHEKDDRKSRRR.

This sequence belongs to the universal ribosomal protein uS19 family.

Its function is as follows. Protein S19 forms a complex with S13 that binds strongly to the 16S ribosomal RNA. This is Small ribosomal subunit protein uS19 from Salinispora tropica (strain ATCC BAA-916 / DSM 44818 / JCM 13857 / NBRC 105044 / CNB-440).